A 239-amino-acid chain; its full sequence is LexA repressor (239 aa).

The segment at residues 26-46 is a DNA-binding region (H-T-H motif); sequence FDEMKDALDLASKSGIHRLIT. Active-site for autocatalytic cleavage activity residues include S159 and K197.

Belongs to the peptidase S24 family. As to quaternary structure, homodimer.

The enzyme catalyses Hydrolysis of Ala-|-Gly bond in repressor LexA.. Its function is as follows. Represses a number of genes involved in the response to DNA damage (SOS response), including recA and lexA. In the presence of single-stranded DNA, RecA interacts with LexA causing an autocatalytic cleavage which disrupts the DNA-binding part of LexA, leading to derepression of the SOS regulon and eventually DNA repair. The protein is LexA repressor of Rhizobium etli (strain ATCC 51251 / DSM 11541 / JCM 21823 / NBRC 15573 / CFN 42).